Consider the following 429-residue polypeptide: Threonine synthase (429 aa).

Position 107 is an N6-(pyridoxal phosphate)lysine (lysine 107).

It belongs to the threonine synthase family. Pyridoxal 5'-phosphate is required as a cofactor.

It carries out the reaction O-phospho-L-homoserine + H2O = L-threonine + phosphate. It functions in the pathway amino-acid biosynthesis; L-threonine biosynthesis; L-threonine from L-aspartate: step 5/5. Its function is as follows. Catalyzes the gamma-elimination of phosphate from L-phosphohomoserine and the beta-addition of water to produce L-threonine. The protein is Threonine synthase (thrC) of Serratia marcescens.